The primary structure comprises 321 residues: Ubiquinol oxidase 1, mitochondrial (321 aa).

A mitochondrion-targeting transit peptide spans 1 to 41; it reads MMMMMSRSGANRVANTAMFVAKGLSGEVGGLRALYGGGVRS. The helical transmembrane segment at 146–166 threads the bilayer; sequence AMMLETVAAVPGMVAGMLLHC. Residues glutamate 150, glutamate 189, and histidine 192 each contribute to the Fe cation site. Residues 208-228 traverse the membrane as a helical segment; it reads ALVITVQGVFFNAYFLGYLLS. Residues glutamate 240, glutamate 291, and histidine 294 each contribute to the Fe cation site.

It belongs to the alternative oxidase family. As to quaternary structure, homodimer; disulfide-linked. The cofactor is Fe cation.

It is found in the mitochondrion inner membrane. The catalysed reaction is 2 a ubiquinol + O2 = 2 a ubiquinone + 2 H2O. Its activity is regulated as follows. When the two monomeric subunits are covalently linked by a S-S bond, the enzyme is essentially inactive. When the disulfide bond is reduced, its component sulfhydryls can associate with K-keto acids through formation of a thiohemiacetal, resulting in enzyme activation. Pyruvate increases Vmax, but not the substrate affinity. Catalyzes the cyanide-resistant oxidation of ubiquinol and the reduction of molecular oxygen to water, but does not translocate protons and consequently is not linked to oxidative phosphorylation. May increase respiration when the cytochrome respiratory pathway is restricted, or in response to low temperatures. The chain is Ubiquinol oxidase 1, mitochondrial (AOX1) from Glycine max (Soybean).